The primary structure comprises 441 residues: 3-phosphoshikimate 1-carboxyvinyltransferase (441 aa).

The segment at 1–21 (MSANGPSHPARELKAGGSLSG) is disordered. 3-phosphoshikimate is bound by residues Lys29, Ser30, and Arg34. A phosphoenolpyruvate-binding site is contributed by Lys29. Residues Gly103 and Arg132 each contribute to the phosphoenolpyruvate site. 4 residues coordinate 3-phosphoshikimate: Ser177, Gln179, Asp328, and Lys355. Position 179 (Gln179) interacts with phosphoenolpyruvate. The Proton acceptor role is filled by Asp328. Residues Arg359 and Arg401 each coordinate phosphoenolpyruvate.

This sequence belongs to the EPSP synthase family. As to quaternary structure, monomer.

The protein localises to the cytoplasm. The enzyme catalyses 3-phosphoshikimate + phosphoenolpyruvate = 5-O-(1-carboxyvinyl)-3-phosphoshikimate + phosphate. The protein operates within metabolic intermediate biosynthesis; chorismate biosynthesis; chorismate from D-erythrose 4-phosphate and phosphoenolpyruvate: step 6/7. In terms of biological role, catalyzes the transfer of the enolpyruvyl moiety of phosphoenolpyruvate (PEP) to the 5-hydroxyl of shikimate-3-phosphate (S3P) to produce enolpyruvyl shikimate-3-phosphate and inorganic phosphate. This chain is 3-phosphoshikimate 1-carboxyvinyltransferase, found in Parasynechococcus marenigrum (strain WH8102).